We begin with the raw amino-acid sequence, 300 residues long: Dihydroorotate dehydrogenase B (NAD(+)), catalytic subunit (300 aa).

Residues serine 20 and 44-45 each bind FMN; that span reads KG. Substrate is bound by residues lysine 44 and 68-72; that span reads NSVGL. 2 residues coordinate FMN: asparagine 98 and asparagine 124. Asparagine 124 provides a ligand contact to substrate. Cysteine 127 acts as the Nucleophile in catalysis. Positions 162 and 188 each coordinate FMN. 189 to 190 is a substrate binding site; sequence NT. Residues glycine 214, 240 to 241, and 262 to 263 contribute to the FMN site; these read GG and GT.

It belongs to the dihydroorotate dehydrogenase family. Type 1 subfamily. In terms of assembly, heterotetramer of 2 PyrK and 2 PyrD type B subunits. Requires FMN as cofactor.

Its subcellular location is the cytoplasm. It catalyses the reaction (S)-dihydroorotate + NAD(+) = orotate + NADH + H(+). It functions in the pathway pyrimidine metabolism; UMP biosynthesis via de novo pathway; orotate from (S)-dihydroorotate (NAD(+) route): step 1/1. Catalyzes the conversion of dihydroorotate to orotate with NAD(+) as electron acceptor. The sequence is that of Dihydroorotate dehydrogenase B (NAD(+)), catalytic subunit (pyrD) from Caldicellulosiruptor saccharolyticus (strain ATCC 43494 / DSM 8903 / Tp8T 6331).